Here is a 318-residue protein sequence, read N- to C-terminus: Protein-L-histidine N-pros-methyltransferase (318 aa).

The first 18 residues, 1–18, serve as a signal peptide directing secretion; sequence MRLLAGWLCLSLASVWLA. Asn35 carries an N-linked (GlcNAc...) asparagine glycan. S-adenosyl-L-homocysteine is bound by residues Glu174, Asn210, and Tyr295.

This sequence belongs to the METTL9 family.

The protein localises to the endoplasmic reticulum. It localises to the mitochondrion. The catalysed reaction is L-histidyl-[protein] + S-adenosyl-L-methionine = N(pros)-methyl-L-histidyl-[protein] + S-adenosyl-L-homocysteine + H(+). Its function is as follows. Protein-histidine N-methyltransferase that specifically catalyzes 1-methylhistidine (pros-methylhistidine) methylation of target proteins. Specifically methylates the second His of proteins with a His-x-His (HxH) motif (where 'x' is preferably a small amino acid), while exploiting the first one as a recognition signature. Catalyzes methylation of target proteins such as S100A9, NDUFB3, SLC39A5, SLC39A7, ARMC6 and DNAJB12; 1-methylhistidine modification may affect the binding of zinc and other metals to its target proteins. Constitutes the main methyltransferase for the 1-methylhistidine modification in cell. The polypeptide is Protein-L-histidine N-pros-methyltransferase (Bos taurus (Bovine)).